Consider the following 160-residue polypeptide: Twist-related protein 2 (160 aa).

Residues 1–63 (MEEGSSSPVS…GSPSAQSFEE (63 aa)) form a disordered region. The span at 27 to 37 (KRFGRKRRYSK) shows a compositional bias: basic residues. The bHLH domain maps to 66-117 (SQRILANVRERQRTQSLNEAFAALRKIIPTLPSDKLSKIQTLKLAARYIDFL).

In terms of assembly, efficient DNA binding requires dimerization with another bHLH protein. Forms a heterodimer with TCF3/E12. Also interacts with MEF2C. As to expression, expressed at low levels in sclerotome and dermatome of somites, and in limb buds at 10.5 dpc. Accumulates predominantly in dermatome, prevertebrae and derivatives of branchial arches by 13 dpc. Also expressed near surface of embryo and in chondrogenic cells. In adult, expressed at low levels in skin, bladder, uterus, aorta and heart.

The protein resides in the nucleus. The protein localises to the cytoplasm. Its function is as follows. Binds to the E-box consensus sequence 5'-CANNTG-3' as a heterodimer and inhibits transcriptional activation by MYOD1, MYOG, MEF2A and MEF2C. Also represses expression of pro-inflammatory cytokines such as TNFA and IL1B. Involved in postnatal glycogen storage and energy metabolism. Inhibits the premature or ectopic differentiation of preosteoblast cells during osteogenesis, possibly by changing the internal signal transduction response of osteoblasts to external growth factors. This Mus musculus (Mouse) protein is Twist-related protein 2 (Twist2).